The chain runs to 64 residues: MNAKQTQIMGGGGRDEDNAEDSAQASGQVQINTEGVDSLLDEIDGLLENNAEEFVRSYVQKGGE.

The tract at residues 1-32 (MNAKQTQIMGGGGRDEDNAEDSAQASGQVQIN) is disordered. The tract at residues 20–58 (EDSAQASGQVQINTEGVDSLLDEIDGLLENNAEEFVRSY) is ARC ATPase binding. A compositionally biased stretch (polar residues) spans 21 to 32 (DSAQASGQVQIN). An Isoglutamyl lysine isopeptide (Glu-Lys) (interchain with K-? in acceptor proteins) cross-link involves residue Glu-64.

Belongs to the prokaryotic ubiquitin-like protein family. As to quaternary structure, strongly interacts with the proteasome-associated ATPase ARC through a hydrophobic interface; the interacting region of Pup lies in its C-terminal half. There is one Pup binding site per ARC hexamer ring.

It participates in protein degradation; proteasomal Pup-dependent pathway. Protein modifier that is covalently attached to lysine residues of substrate proteins, thereby targeting them for proteasomal degradation. The tagging system is termed pupylation. This chain is Prokaryotic ubiquitin-like protein Pup, found in Corynebacterium glutamicum (strain R).